The primary structure comprises 299 residues: Nucleotide-binding protein RER_30260 (299 aa).

Residue 19-26 (GLSGAGLS) coordinates ATP. 70 to 73 (DVRS) provides a ligand contact to GTP.

It belongs to the RapZ-like family.

In terms of biological role, displays ATPase and GTPase activities. The sequence is that of Nucleotide-binding protein RER_30260 from Rhodococcus erythropolis (strain PR4 / NBRC 100887).